A 1591-amino-acid polypeptide reads, in one-letter code: Rho guanine nucleotide exchange factor TIAM1 (1591 aa).

The disordered stretch occupies residues 1-78; that stretch reads MGNAESQHVE…AENGLEPFSQ (78 aa). Glycine 2 is lipidated: N-myristoyl glycine. Basic and acidic residues predominate over residues 7 to 19; it reads QHVEHEFYGEKHA. Positions 20–49 are enriched in basic residues; sequence SLGRKHTSRSLRLSHKTRRTRHASSGKVIH. Positions 53-67 are enriched in low complexity; that stretch reads EVSTRSSSTPSIPQS. Phosphoserine is present on serine 231. 2 disordered regions span residues 298–379 and 393–422; these read SEGA…GDAA and MSTT…SPGQ. 2 stretches are compositionally biased toward polar residues: residues 300 to 313 and 340 to 361; these read GATN…NSMQ and TTDT…SPTT. Phosphoserine is present on residues serine 356 and serine 358. The span at 367–377 shows a compositional bias: low complexity; the sequence is GSDSGSSSTGD. Positions 412 to 422 are enriched in polar residues; it reads QSSGTLSSPGQ. The PH 1 domain occupies 434 to 549; it reads VRKAGALAVK…TAIHSACATA (116 aa). Position 695 is a phosphoserine (serine 695). Residues 765-832 form the RBD domain; that stretch reads TPSWFCLPNN…QPEEDIYELL (68 aa). Tyrosine 829 bears the Phosphotyrosine; by NTRK2 mark. In terms of domain architecture, PDZ spans 845–908; that stretch reads SIHIEKSDTA…NNRAADALNS (64 aa). Residues 939 to 1034 form a disordered region; it reads SPPHRVDGPA…TGPQLATMRQ (96 aa). The span at 958-975 shows a compositional bias: polar residues; it reads LTSNPGHSLCSEQGSSAE. The segment covering 977-990 has biased composition (acidic residues); it reads APEETEGPDLESSD. Over residues 1014-1024 the composition is skewed to low complexity; the sequence is PSDQSPSPQDS. A compositionally biased stretch (polar residues) spans 1025–1034; that stretch reads TGPQLATMRQ. Residues 1040 to 1234 enclose the DH domain; that stretch reads KLRKVICELL…NKVASHINEM (195 aa). Residues 1261 to 1397 enclose the PH 2 domain; the sequence is DLSMGDLLLH…KAVHSILRDK (137 aa). Tyrosine 1323 carries the phosphotyrosine modification. Glycyl lysine isopeptide (Lys-Gly) (interchain with G-Cter in ubiquitin) cross-links involve residues lysine 1404 and lysine 1420. A disordered region spans residues 1456–1482; sequence TIDSDAVSASSPEKESQQPPGGGDTDR. A Phosphoserine modification is found at serine 1519.

Belongs to the TIAM family. In terms of assembly, component of the Par polarity complex, composed of at least phosphorylated PRKCZ, PARD3 and TIAM1. Interacts with NTRK2; mediates the activation of RAC1 by BDNF. Interacts with MAPK8IP2 and CD44. Interacts with BAIAP2. Interacts with EPHA8; regulates clathrin-mediated endocytosis of EPHA8. Interacts with PARD3. Interacts (via PDZ domain) with CNTNAP4, SDC1 and SDC3 (via C-terminus). In terms of processing, ubiquitinated. Undergoes 'Lys-48' ubiquitination at Lys-1404 and Lys-1420 by a CUL3(KBTBD6/7) E3 ubiquitin ligase complex composed of CUL3, RBX1, KBTBD6 and KBTBD7. 'Lys-48' ubiquitination at Lys-1404 and Lys-1420 triggers proteasomal degradation. Ubiquitination at Lys-1404 and Lys-1420 by CUL3(KBTBD6/7) also requires the membrane-associated protein GABARAP and may therefore be spatially restricted within the cell. As to expression, found in virtually all analyzed tumor cell lines including B- and T-lymphomas, neuroblastomas, melanomas and carcinomas.

It is found in the cell junction. It localises to the cell membrane. Its function is as follows. Guanyl-nucleotide exchange factor that activates RHO-like proteins and connects extracellular signals to cytoskeletal activities. Activates RAC1, CDC42, and to a lesser extent RHOA and their downstream signaling to regulate processes like cell adhesion and cell migration. This Homo sapiens (Human) protein is Rho guanine nucleotide exchange factor TIAM1.